The primary structure comprises 572 residues: Sulfite reductase [NADPH] hemoprotein beta-component (572 aa).

Residues C437, C443, C482, and C486 each coordinate [4Fe-4S] cluster. C486 provides a ligand contact to siroheme.

Belongs to the nitrite and sulfite reductase 4Fe-4S domain family. As to quaternary structure, alpha(8)-beta(8). The alpha component is a flavoprotein, the beta component is a hemoprotein. Siroheme is required as a cofactor. The cofactor is [4Fe-4S] cluster.

The enzyme catalyses hydrogen sulfide + 3 NADP(+) + 3 H2O = sulfite + 3 NADPH + 4 H(+). Its pathway is sulfur metabolism; hydrogen sulfide biosynthesis; hydrogen sulfide from sulfite (NADPH route): step 1/1. Component of the sulfite reductase complex that catalyzes the 6-electron reduction of sulfite to sulfide. This is one of several activities required for the biosynthesis of L-cysteine from sulfate. The polypeptide is Sulfite reductase [NADPH] hemoprotein beta-component (Staphylococcus epidermidis (strain ATCC 35984 / DSM 28319 / BCRC 17069 / CCUG 31568 / BM 3577 / RP62A)).